Here is a 250-residue protein sequence, read N- to C-terminus: Cell division protein FtsQ (250 aa).

The Cytoplasmic portion of the chain corresponds to 1–11; that stretch reads MWNNVRQLNLA. Residues 12 to 32 form a helical membrane-spanning segment; it reads ASALYALLLLVLAAAGCYWLI. The Periplasmic segment spans residues 33 to 250; sequence QRPAFALREI…FLTDTDKGKK (218 aa). The 70-residue stretch at 37 to 106 folds into the POTRA domain; the sequence is FALREIRIDG…NALAVTLEEY (70 aa).

This sequence belongs to the FtsQ/DivIB family. FtsQ subfamily. Part of a complex composed of FtsB, FtsL and FtsQ.

The protein localises to the cell inner membrane. Functionally, essential cell division protein. May link together the upstream cell division proteins, which are predominantly cytoplasmic, with the downstream cell division proteins, which are predominantly periplasmic. May control correct divisome assembly. This Burkholderia pseudomallei (strain K96243) protein is Cell division protein FtsQ.